The sequence spans 637 residues: Transcription factor PHYTOCHROME INTERACTING FACTOR-LIKE 15 (637 aa).

Residues 35–46 are compositionally biased toward gly residues; it reads FFGGTGGGGGGS. Disordered regions lie at residues 35 to 54, 146 to 213, and 356 to 397; these read FFGGTGGGGGGSSSRAQERQ, ASLP…EGVM, and ECSA…RRRR. Residues 149–170 show a composition bias toward polar residues; it reads PASNHNGATNNRNAPVATTTTR. Residues 384–397 are basic motif; sequence RTAEVHNLSERRRR. The segment covering 384 to 397 has biased composition (basic and acidic residues); it reads RTAEVHNLSERRRR. The bHLH domain occupies 384–433; sequence RTAEVHNLSERRRRDRINEKMRALQELIPNCNKIDKASMLDEAIEYLKTL. The helix-loop-helix motif stretch occupies residues 398–433; that stretch reads DRINEKMRALQELIPNCNKIDKASMLDEAIEYLKTL. Positions 601 to 637 are disordered; it reads GDNENFRIPSSAQTKSSQFSDGTGKGTNARERDGAET. Residues 608–621 show a composition bias toward polar residues; that stretch reads IPSSAQTKSSQFSD. The segment covering 628 to 637 has biased composition (basic and acidic residues); that stretch reads NARERDGAET.

Belongs to the bHLH protein family. In terms of assembly, interacts with LF and PRR1.

The protein resides in the nucleus. Functionally, transcription factor that may act as negative regulator of phyB-dependent light signal transduction. The sequence is that of Transcription factor PHYTOCHROME INTERACTING FACTOR-LIKE 15 from Oryza sativa subsp. japonica (Rice).